We begin with the raw amino-acid sequence, 517 residues long: Maturase K (517 aa).

The protein belongs to the intron maturase 2 family. MatK subfamily.

Its subcellular location is the plastid. It localises to the chloroplast. Functionally, usually encoded in the trnK tRNA gene intron. Probably assists in splicing its own and other chloroplast group II introns. The polypeptide is Maturase K (Caryota mitis (Burmese fishtail palm)).